Consider the following 399-residue polypeptide: Glucose-1-phosphate adenylyltransferase (399 aa).

Alpha-D-glucose 1-phosphate is bound by residues Gly158, 174-175, and Ser192; that span reads EK.

This sequence belongs to the bacterial/plant glucose-1-phosphate adenylyltransferase family. Homotetramer.

It catalyses the reaction alpha-D-glucose 1-phosphate + ATP + H(+) = ADP-alpha-D-glucose + diphosphate. The protein operates within glycan biosynthesis; glycogen biosynthesis. Functionally, involved in the biosynthesis of ADP-glucose, a building block required for the elongation reactions to produce glycogen. Catalyzes the reaction between ATP and alpha-D-glucose 1-phosphate (G1P) to produce pyrophosphate and ADP-Glc. The chain is Glucose-1-phosphate adenylyltransferase from Streptomyces coelicolor (strain ATCC BAA-471 / A3(2) / M145).